Reading from the N-terminus, the 387-residue chain is 3-ketoacyl-CoA thiolase (387 aa).

The active-site Acyl-thioester intermediate is Cys-91. Catalysis depends on proton acceptor residues His-343 and Cys-373.

This sequence belongs to the thiolase-like superfamily. Thiolase family. In terms of assembly, heterotetramer of two alpha chains (FadB) and two beta chains (FadA).

It is found in the cytoplasm. The catalysed reaction is an acyl-CoA + acetyl-CoA = a 3-oxoacyl-CoA + CoA. It participates in lipid metabolism; fatty acid beta-oxidation. In terms of biological role, catalyzes the final step of fatty acid oxidation in which acetyl-CoA is released and the CoA ester of a fatty acid two carbons shorter is formed. This chain is 3-ketoacyl-CoA thiolase, found in Pectobacterium carotovorum subsp. carotovorum (strain PC1).